We begin with the raw amino-acid sequence, 141 residues long: ATP synthase epsilon chain (141 aa).

It belongs to the ATPase epsilon chain family. F-type ATPases have 2 components, CF(1) - the catalytic core - and CF(0) - the membrane proton channel. CF(1) has five subunits: alpha(3), beta(3), gamma(1), delta(1), epsilon(1). CF(0) has three main subunits: a, b and c.

It is found in the cell inner membrane. In terms of biological role, produces ATP from ADP in the presence of a proton gradient across the membrane. This Pseudomonas aeruginosa (strain LESB58) protein is ATP synthase epsilon chain.